The following is a 503-amino-acid chain: EZH inhibitory protein (503 aa).

A compositionally biased stretch (basic and acidic residues) spans 1–16; that stretch reads MATQSDMEKEQKHQQD. Disordered regions lie at residues 1–72, 97–462, and 483–503; these read MATQ…AAAA, HSDR…RSIS, and VPPE…PPEP. Low complexity predominate over residues 41-72; that stretch reads PAASVTTVSSQASPSGGAALSSSTAGSSAAAA. Over residues 97-107 the composition is skewed to basic and acidic residues; that stretch reads HSDRQDCRSPH. Positions 184–197 are enriched in polar residues; the sequence is YPCSGASTSSQATQ. A Phosphoserine modification is found at Ser259. The span at 345-366 shows a compositional bias: low complexity; that stretch reads LRSRSTQQRSALLSRRSLSGSA. Residues 401–409 are sufficient for interaction with EZH2; it reads WHAVRMRAS. The segment at 403–423 is necessary and sufficient for inhibition of PRC2/EED-EZH1 and PRC2/EED-EZH2 complex activity; it reads AVRMRASSPSPPGRFFLPIPQ. Over residues 428–453 the composition is skewed to low complexity; the sequence is SSSSSYASNSSSPSRSPGLSPSSPSP.

In terms of assembly, interacts with PRC2/EED-EZH1 complex member EZH1 and with PRC2/EED-EZH2 complex member EZH2; the interaction blocks EZH1/EZH2 methyltransferase activity. Interacts (via C-terminus) with SUZ12 which is a member of the PRC2/EED-EZH1 and PRC2/EED-EZH2 complexes. As to expression, in testis, detected in male germ cells inside the seminiferous tubules, especially in spermatogonia and round spermatids (at protein level). In the ovary, expressed in primordial follicles and oocytes but not the external follicle cells (at protein level).

It localises to the nucleus. The protein resides in the cytoplasm. Inhibits PRC2/EED-EZH1 and PRC2/EED-EZH2 complex function by inhibiting EZH1/EZH2 methyltransferase activity, thereby causing down-regulation of histone H3 trimethylation on 'Lys-27' (H3K27me3). Probably inhibits methyltransferase activity by limiting the stimulatory effect of cofactors such as AEBP2 and JARID2. Inhibits H3K27me3 deposition during spermatogenesis and oogenesis. The protein is EZH inhibitory protein of Homo sapiens (Human).